Reading from the N-terminus, the 546-residue chain is Beta-amylase (546 aa).

Positions 1–30 are cleaved as a signal peptide; sequence MKNQFQYCCIVILSVVMLFVSLLIPQASSA. Residue Asp-79 coordinates substrate. Ca(2+) is bound by residues Glu-86, Asp-90, and Gln-91. The substrate site is built by His-119 and Asp-127. Cys-121 and Cys-129 are disulfide-bonded. The Ca(2+) site is built by Glu-171 and Glu-174. Residue Glu-202 is the Proton donor of the active site. Residues Lys-317, His-322, and Thr-360 each coordinate substrate. The active-site Proton acceptor is Glu-397. Substrate contacts are provided by residues 398-399 and Arg-427; that span reads NA. One can recognise a CBM20 domain in the interval 444–546; it reads LLGVTPVMQT…LKTTSHTSSW (103 aa).

The protein belongs to the glycosyl hydrolase 14 family. Monomer. Requires Ca(2+) as cofactor.

The enzyme catalyses Hydrolysis of (1-&gt;4)-alpha-D-glucosidic linkages in polysaccharides so as to remove successive maltose units from the non-reducing ends of the chains.. This chain is Beta-amylase (spoII), found in Bacillus cereus.